The primary structure comprises 584 residues: Putative sel1-like repeat-containing protein L18 (584 aa).

Sel1-like repeat units follow at residues 132–167 (SMAQ…DQNN), 168–203 (KYGL…CQNF), 204–237 (SKAQ…NQNH), 238–273 (SSAQ…SQGL), 274–309 (NSAK…YDDG), and 316–351 (EVAM…NTKN).

The sequence is that of Putative sel1-like repeat-containing protein L18 from Acanthamoeba polyphaga (Amoeba).